The following is a 496-amino-acid chain: MDISISWVVIIVFVLSYLILMDKWRASKLPGNLPPSPPKLPVIGHLHLLRGGLPQHVLRGITQKYGAVAHLQLGEVHSVVLSSAESTKQAMKVLDPTFADRFDSIGSQIMWYNNDDMIFSRYNDHWRQIRKICVSELLSPRNVRSFGFIRQDEMARLIRVFESSEGAAINASEEISKMSCAIVCRAAFGSVLKDQGKLADLVKEALSMASGFELADLYPSSWLLNLLCFNKYRLQRMRGRLDNILDGFLEEHKVKKSGEFGGEDIIDVLYRMQKDTEMKAPITNNGIKGFIFDVFSAGTETSATTIQWALSELMKNPEKMVKAQAEVREKLKGKTNPDVADVQELKYLHSVVKETLRLHPPFPLIPRLCKEECEVTGYTIPAKTRILVNVWSIGRDPAYWKDPDTFNPDRFDEVSRDVIGNDFELIPFGAGRRVCPGLHFGLANVEVPLAQLLYHFDYKLPSAMTAADMDMSETPGLSGPRKNPLIMIPTIHNPTS.

The helical; Signal-anchor for type II membrane protein transmembrane segment at 1-21 (MDISISWVVIIVFVLSYLILM) threads the bilayer. Residue Cys-435 participates in heme binding.

The protein belongs to the cytochrome P450 family. Heme is required as a cofactor. Mostly expressed in flowers and, to a lower extent, in leaves, especially in glandular trichomes.

It is found in the membrane. The catalysed reaction is (4R)-limonene + reduced [NADPH--hemoprotein reductase] + O2 = (1R,5S)-carveol + oxidized [NADPH--hemoprotein reductase] + H2O + H(+). It carries out the reaction (4S)-limonene + reduced [NADPH--hemoprotein reductase] + O2 = (1S,5R)-carveol + oxidized [NADPH--hemoprotein reductase] + H2O + H(+). The enzyme catalyses gamma-terpinene + 2 reduced [NADPH--hemoprotein reductase] + 2 O2 = carvacrol + 2 oxidized [NADPH--hemoprotein reductase] + 3 H2O + 2 H(+). Its pathway is secondary metabolite biosynthesis; terpenoid biosynthesis. Functionally, involved in the biosynthesis of phenolic monoterpenes natural products thymol and carvacrol which have a broad range of biological activities acting as antimicrobial compounds, insecticides, antioxidants and pharmaceutical agents. Catalyzes the C2-hydroxylation of gamma-terpinene to produce carvacrol. Mediates also the C6-hydroxylation of (4S)-limonene and (4R)-limonene to form carveol. This Thymus vulgaris (Thyme) protein is Cytochrome P450 71D180.